Reading from the N-terminus, the 1149-residue chain is APSYRVRRTDISGHAEEAVVNAANAKGTVGDGVCRAVARKWPDSFKGAATPVGTAKLVQANGMNVIHAVGPNFSTVTEAEGDRELAAAYRAVAGIINASNIKSVAIPLLSTGVFSGGKDRVMQSLNHLFTAMDTTDADVVIYCRDKAWEKKIQEAIDRRTAVELVSEDISLESDLIRVHPDSCLVGRKGYSITDGKLHSYLEGTRFHQTAVDMAEISTLWPKLQDANEQICLYALGESMDSIRTKCPVEDADSSTPPKTVPCLCRYAMTAERVARLRMNNTKAIIVCSSFPLPKYRIEGVQKVKCDRVLIFDQTVPSLVSPRKYIPAAASTHADTVSLDSTVSTGSAWSFPSEATYETMEVVAEVHHSEPPVPPPRRRRAQVTMHHQELLEVSDMHTPIAARVEIPVYDTAVVVERVAIPCTSEYAKPIPAPRAARVVPVPAPRIQRASTYRVSPTPTPRVLRASVCSVTTSAGVEFPWAPEDLEVLTEPVHCKMREPVELPWEPEDVDIQFGDFETSDKIQFGDIDFDQFXLGRAGAYIFSSDTGPGHLQQKSVRQHALPCEMLYVHEEERTYPPALDEAREKLLQAKMQMAPTEANKSRYQSRKVENMKAVIIDRLKDGARTYLTEQSEKIPTYVSKYPRPVYSPSVEDSLQNPEVAVAACNAFLEANYPTVASYQITDEYDAYLDMVDGSESCLDRATFCPAKLRCYPKHHAYHQPQVRSAVPSPFQNTLQNVLAAATKRNCNVTQMRELPTLDSAVLNVECFKKFACNGEYWQEFKDNPIRITTENITTYVTRLKGPKAAALFAKTHNLVPLQEVPMDRFVVDMKRDVKVTPGTKHTEERPKVQVIQAAEPLATAYLCGIHRELVRRLKAVLAPNIHTLFDMSAEDFDAIIAAHFQPGDAVLETDIASFDKSQDDSLALTALMLLEDLGVDQELLDLIEAAFGEITSVHLPTGTRFKFGAMMKSGMFLTLFVNTLLNIVIACRVLREKLTNSVCAAFIGDDNIVHGVRSDPLMAERCASWVNMEVKIIDATMCEKPPYFCGGFILYDKVTGSACRVADPLKRLFKLGKPLPAGDTQDEDRRRALKDETDRWARVGLKSELEIALSSRYEVNGTGNIVRAMATLAKSLKNFKKLRGPIVHLYGGPK.

The region spanning 1-160 (APSYRVRRTD…KIQEAIDRRT (160 aa)) is the Macro domain. ADP-D-ribose is bound by residues aspartate 10, asparagine 24, glycine 32, glycine 112, valine 113, and phenylalanine 114. Positions 262, 264, 287, and 305 each coordinate Zn(2+). Phosphothreonine; by host is present on threonine 344. 2 short sequence motifs (FGDF; binding to host G3BP1) span residues 512-515 (FGDF) and 523-526 (FGDI). The RdRp catalytic domain maps to 903–1018 (DAVLETDIAS…HGVRSDPLMA (116 aa)).

In terms of assembly, interacts with mRNA-capping enzyme nsP1. Interacts with host DDX1. RNA-directed Interacts with host DDX3. Interacts (via C-terminus) with host G3BP1; this interaction inhibits the formation of host stress granules on viral mRNAs and the nsp3-G3BP1 complexes bind viral RNAs and probably orchestrate the assembly of viral replication complexes. Interacts (via C-terminus) with host G3BP2; this interaction inhibits the formation of host stress granules on viral mRNAs and the nsp3-G3BP2 complexes bind viral RNAs and probably orchestrate the assembly of viral replication complexes. As to quaternary structure, interacts with itself. Interacts with mRNA-capping enzyme nsP1. Interacts with protease nsP2. Interacts with itself. It depends on Mg(2+) as a cofactor. The cofactor is Mn(2+). Post-translationally, polyprotein P1234: Specific enzymatic cleavages in vivo yield mature proteins. The processing of the polyprotein is temporally regulated. In early stages (1.7 hpi), P1234 is first cleaved in trans through its nsP2 protease activity, releasing P123' and nsP4, which associate to form the early replication complex. At the same time, P1234 is also cut at the nsP1/nsP2 site early in infection but with lower efficiency. After replication of the viral minus-strand RNAs (4 hpi), the polyproteins are cut at the nsP1/nsP2 and nsP2/nsP3 sites very efficiently, preventing accumulation of P123' and P1234 and allowing the formation of the late replication complex. NsP3'/nsP4 site is not cleaved anymore and P34 is produced rather than nsP4. Specific enzymatic cleavages in vivo yield mature proteins. The processing of the polyprotein is temporally regulated. In early stages (1.7 hpi), P123 is cleaved at the nsP1/nsP2 site with low efficiency. After replication of the viral minus-strand RNAs (4 hpi), the polyproteins are cut at the nsP1/nsP2 and nsP2/nsP3 sites very efficiently, preventing accumulation of P123 and allowing the formation of the late replication complex. In terms of processing, phosphorylated by host on serines and threonines. Post-translationally, ubiquitinated; targets the protein for rapid degradation via the ubiquitin system. Nsp4 is present in extremely low quantities due to low frequency of translation through the amber stop-codon and the degradation by the ubiquitin pathway.

It localises to the host cytoplasmic vesicle membrane. The catalysed reaction is RNA(n) + a ribonucleoside 5'-triphosphate = RNA(n+1) + diphosphate. It catalyses the reaction 4-O-(ADP-D-ribosyl)-L-aspartyl-[protein] + H2O = L-aspartyl-[protein] + ADP-D-ribose + H(+). The enzyme catalyses 5-O-(ADP-D-ribosyl)-L-glutamyl-[protein] + H2O = L-glutamyl-[protein] + ADP-D-ribose + H(+). It carries out the reaction RNA(n) + ATP = RNA(n)-3'-adenine ribonucleotide + diphosphate. The catalysed reaction is ADP-alpha-D-ribose 1''-phosphate + H2O = ADP-D-ribose + phosphate. Polyprotein P1234: Inactive precursor of the viral replicase, which is activated by cleavages carried out by the viral protease nsP2. Functionally, the early replication complex formed by the polyprotein P123 and nsP4 synthesizes minus-strand RNAs. As soon P123 is cleaved into mature proteins, the plus-strand RNAs synthesis begins. Its function is as follows. The early replication complex formed by the polyprotein P123' and nsP4 synthesizes minus-strand RNAs. Polyprotein P123' is a short-lived polyprotein that accumulates during early stage of infection. As soon P123' is cleaved into mature proteins, the plus-strand RNAs synthesis begins. In terms of biological role, seems to be essential for minus-strand RNAs and subgenomic 26S mRNAs synthesis. Displays mono-ADP-ribosylhydrolase activity. ADP-ribosylation is a post-translational modification that controls various processes of the host cell and the virus probably needs to revert it for optimal viral replication. Binds proteins of FXR family and sequesters them into the viral RNA replication complexes thereby inhibiting the formation of host stress granules on viral mRNAs. The nsp3'-FXR complexes bind viral RNAs and probably orchestrate the assembly of viral replication complexes, thanks to the ability of FXR family members to self-assemble and bind DNA. Seems to be essential for minus-strand RNAs and subgenomic 26S mRNAs synthesis. Displays mono-ADP-ribosylhydrolase activity. ADP-ribosylation is a post-translational modification that controls various processes of the host cell and the virus probably needs to revert it for optimal viral replication. Binds proteins of G3BP family and sequesters them into the viral RNA replication complexes thereby inhibiting the formation of host stress granules on viral mRNAs. The nsp3-G3BP complexes bind viral RNAs and probably orchestrate the assembly of viral replication complexes, thanks to the ability of G3BP family members to self-assemble and bind DNA. Functionally, RNA dependent RNA polymerase. Replicates genomic and antigenomic RNA by recognizing replications specific signals. The early replication complex formed by the polyprotein P123 and nsP4 synthesizes minus-strand RNAs. The late replication complex composed of fully processed nsP1-nsP4 is responsible for the production of genomic and subgenomic plus-strand RNAs. The polypeptide is Polyprotein nsP1234 (Ross river virus (strain T48) (RRV)).